The primary structure comprises 121 residues: Non-structural protein 8 (121 aa).

An N-terminal signal peptide occupies residues 1-15; it reads MKLLIVFGLLTSVYC. An SARS ORF8 Ig-like domain is found at 19-121; it reads ECSIQECCEN…HDVRVVLDFI (103 aa). 3 cysteine pairs are disulfide-bonded: C25–C90, C37–C102, and C61–C83.

The sequence is that of Non-structural protein 8 from Rhinolophus macrotis (Big-eared horseshoe bat).